We begin with the raw amino-acid sequence, 168 residues long: Crossover junction endodeoxyribonuclease RuvC (168 aa).

Active-site residues include D7, E64, and D136. Mg(2+)-binding residues include D7, E64, and D136.

It belongs to the RuvC family. As to quaternary structure, homodimer which binds Holliday junction (HJ) DNA. The HJ becomes 2-fold symmetrical on binding to RuvC with unstacked arms; it has a different conformation from HJ DNA in complex with RuvA. In the full resolvosome a probable DNA-RuvA(4)-RuvB(12)-RuvC(2) complex forms which resolves the HJ. Requires Mg(2+) as cofactor.

The protein resides in the cytoplasm. It carries out the reaction Endonucleolytic cleavage at a junction such as a reciprocal single-stranded crossover between two homologous DNA duplexes (Holliday junction).. In terms of biological role, the RuvA-RuvB-RuvC complex processes Holliday junction (HJ) DNA during genetic recombination and DNA repair. Endonuclease that resolves HJ intermediates. Cleaves cruciform DNA by making single-stranded nicks across the HJ at symmetrical positions within the homologous arms, yielding a 5'-phosphate and a 3'-hydroxyl group; requires a central core of homology in the junction. The consensus cleavage sequence is 5'-(A/T)TT(C/G)-3'. Cleavage occurs on the 3'-side of the TT dinucleotide at the point of strand exchange. HJ branch migration catalyzed by RuvA-RuvB allows RuvC to scan DNA until it finds its consensus sequence, where it cleaves and resolves the cruciform DNA. The sequence is that of Crossover junction endodeoxyribonuclease RuvC from Polynucleobacter necessarius subsp. necessarius (strain STIR1).